Here is a 429-residue protein sequence, read N- to C-terminus: Probable M18 family aminopeptidase 2 (429 aa).

Zn(2+) is bound by residues His82, His156, and His401.

It belongs to the peptidase M18 family. It depends on Zn(2+) as a cofactor.

The sequence is that of Probable M18 family aminopeptidase 2 from Pseudomonas putida (strain ATCC 700007 / DSM 6899 / JCM 31910 / BCRC 17059 / LMG 24140 / F1).